Reading from the N-terminus, the 120-residue chain is Phosphoribosyl-AMP cyclohydrolase (120 aa).

Asp75 contributes to the Mg(2+) binding site. Cys76 contacts Zn(2+). Positions 77 and 79 each coordinate Mg(2+). Residues Cys92 and Cys99 each contribute to the Zn(2+) site.

It belongs to the PRA-CH family. Homodimer. Mg(2+) serves as cofactor. It depends on Zn(2+) as a cofactor.

It is found in the cytoplasm. The catalysed reaction is 1-(5-phospho-beta-D-ribosyl)-5'-AMP + H2O = 1-(5-phospho-beta-D-ribosyl)-5-[(5-phospho-beta-D-ribosylamino)methylideneamino]imidazole-4-carboxamide. The protein operates within amino-acid biosynthesis; L-histidine biosynthesis; L-histidine from 5-phospho-alpha-D-ribose 1-diphosphate: step 3/9. Functionally, catalyzes the hydrolysis of the adenine ring of phosphoribosyl-AMP. This Methanosarcina mazei (strain ATCC BAA-159 / DSM 3647 / Goe1 / Go1 / JCM 11833 / OCM 88) (Methanosarcina frisia) protein is Phosphoribosyl-AMP cyclohydrolase.